The primary structure comprises 535 residues: Dual specificity calcium/calmodulin-dependent 3',5'-cyclic nucleotide phosphodiesterase 1A (535 aa).

Calmodulin-binding stretches follow at residues 24-44 (TEKMWQRLKGILRCLVKQLER) and 114-137 (EKPKFRSIVHAVQAGIFVERMYRK). The 381-residue stretch at 142-522 (VGLAYPAAVI…ERWKELAAQE (381 aa)) folds into the PDEase domain. The Proton donor role is filled by histidine 219. Residues histidine 223, histidine 259, aspartate 260, and aspartate 366 each contribute to the Zn(2+) site. Residue aspartate 260 participates in Mg(2+) binding.

It belongs to the cyclic nucleotide phosphodiesterase family. PDE1 subfamily. Homodimer. Interacts with YWHAZ. The cofactor is Zn(2+). Mg(2+) serves as cofactor. In terms of tissue distribution, several tissues, including brain, kidney, testes and heart.

It carries out the reaction a nucleoside 3',5'-cyclic phosphate + H2O = a nucleoside 5'-phosphate + H(+). The enzyme catalyses 3',5'-cyclic GMP + H2O = GMP + H(+). The catalysed reaction is 3',5'-cyclic AMP + H2O = AMP + H(+). Its activity is regulated as follows. Type I PDE are activated by the binding of calmodulin in the presence of Ca(2+). Functionally, calcium/calmodulin-dependent cyclic nucleotide phosphodiesterase with a dual specificity for the second messengers cGMP and cAMP, which are key regulators of many important physiological processes. Has a higher efficiency with cGMP compared to cAMP. The protein is Dual specificity calcium/calmodulin-dependent 3',5'-cyclic nucleotide phosphodiesterase 1A of Homo sapiens (Human).